Consider the following 117-residue polypeptide: U9-theraphotoxin-Hhn1a (117 aa).

The first 21 residues, 1–21, serve as a signal peptide directing secretion; the sequence is MNTVRVTFLLVFVLAVSLGQA. Positions 22–75 are excised as a propeptide; that stretch reads DEDGNRMEMRQEIEKTEADSSYFAENLLLQKLEELEAKLWEETSEESRNSRQKR. Cystine bridges form between cysteine 76–cysteine 94, cysteine 83–cysteine 99, and cysteine 93–cysteine 114.

The protein belongs to the neurotoxin 14 (magi-1) family. 01 (HNTX-16) subfamily. In terms of tissue distribution, expressed by the venom gland.

It is found in the secreted. Its function is as follows. Probable ion channel inhibitor. The polypeptide is U9-theraphotoxin-Hhn1a (Cyriopagopus hainanus (Chinese bird spider)).